A 362-amino-acid polypeptide reads, in one-letter code: Cobalt-precorrin-5B C(1)-methyltransferase (362 aa).

This sequence belongs to the CbiD family.

It catalyses the reaction Co-precorrin-5B + S-adenosyl-L-methionine = Co-precorrin-6A + S-adenosyl-L-homocysteine. It participates in cofactor biosynthesis; adenosylcobalamin biosynthesis; cob(II)yrinate a,c-diamide from sirohydrochlorin (anaerobic route): step 6/10. Functionally, catalyzes the methylation of C-1 in cobalt-precorrin-5B to form cobalt-precorrin-6A. The sequence is that of Cobalt-precorrin-5B C(1)-methyltransferase from Desulfotalea psychrophila (strain LSv54 / DSM 12343).